Consider the following 306-residue polypeptide: Aspartate carbamoyltransferase catalytic subunit (306 aa).

Residues arginine 55 and threonine 56 each contribute to the carbamoyl phosphate site. Lysine 84 is a binding site for L-aspartate. 3 residues coordinate carbamoyl phosphate: arginine 105, histidine 133, and glutamine 136. L-aspartate contacts are provided by arginine 166 and arginine 227. Residues leucine 265 and proline 266 each coordinate carbamoyl phosphate.

Belongs to the aspartate/ornithine carbamoyltransferase superfamily. ATCase family. As to quaternary structure, heterododecamer (2C3:3R2) of six catalytic PyrB chains organized as two trimers (C3), and six regulatory PyrI chains organized as three dimers (R2).

It catalyses the reaction carbamoyl phosphate + L-aspartate = N-carbamoyl-L-aspartate + phosphate + H(+). The protein operates within pyrimidine metabolism; UMP biosynthesis via de novo pathway; (S)-dihydroorotate from bicarbonate: step 2/3. Its function is as follows. Catalyzes the condensation of carbamoyl phosphate and aspartate to form carbamoyl aspartate and inorganic phosphate, the committed step in the de novo pyrimidine nucleotide biosynthesis pathway. In Aeromonas hydrophila subsp. hydrophila (strain ATCC 7966 / DSM 30187 / BCRC 13018 / CCUG 14551 / JCM 1027 / KCTC 2358 / NCIMB 9240 / NCTC 8049), this protein is Aspartate carbamoyltransferase catalytic subunit.